Reading from the N-terminus, the 262-residue chain is Malonyl-[acyl-carrier protein] O-methyltransferase (262 aa).

It belongs to the methyltransferase superfamily.

It catalyses the reaction malonyl-[ACP] + S-adenosyl-L-methionine = malonyl-[ACP] methyl ester + S-adenosyl-L-homocysteine. Its pathway is cofactor biosynthesis; biotin biosynthesis. In terms of biological role, converts the free carboxyl group of a malonyl-thioester to its methyl ester by transfer of a methyl group from S-adenosyl-L-methionine (SAM). It allows to synthesize pimeloyl-ACP via the fatty acid synthetic pathway. This Erwinia pyrifoliae (strain DSM 12163 / CIP 106111 / Ep16/96) protein is Malonyl-[acyl-carrier protein] O-methyltransferase.